The primary structure comprises 2839 residues: PDZ domain-containing protein 2 (2839 aa).

The 98-residue stretch at 85-182 (LSFGNIPVFG…LIMLRRFKHK (98 aa)) folds into the PDZ 1 domain. The segment at 185–318 (STYNGNSSNS…RFSKGGKTDF (134 aa)) is disordered. The segment covering 189-202 (GNSSNSSEPGETPT) has biased composition (low complexity). The span at 280–296 (HLERSEVDRGTEHRIPK) shows a compositional bias: basic and acidic residues. The PDZ 2 domain maps to 334 to 419 (KMELLKESDG…MVQLVVASKE (86 aa)). Over residues 437–447 (TSSVEDVSSWT) the composition is skewed to polar residues. The disordered stretch occupies residues 437–501 (TSSVEDVSSW…PKQGSNKIKL (65 aa)). A compositionally biased stretch (acidic residues) spans 448–461 (DNEDQEADGEEDEG). Serine 568 is subject to Phosphoserine. In terms of domain architecture, PDZ 3 spans 586 to 672 (IIGLYKEKGK…GLFVLTVRTK (87 aa)). Residues 678–697 (LTPCSTPTHMSRSASPNFNT) show a composition bias toward polar residues. The segment at 678–723 (LTPCSTPTHMSRSASPNFNTSGGASAGGSDEGSSSSLGRKTPGPKD) is disordered. Positions 728-813 (EVTLNKEPRV…GPVRLVIGRH (86 aa)) constitute a PDZ 4 domain. 2 stretches are compositionally biased toward polar residues: residues 832–843 (YQESKEANSSPG) and 894–908 (GCST…PSTS). Disordered regions lie at residues 832–852 (YQES…KSPS) and 879–921 (DFMV…ANSL). A phosphoserine mark is found at serine 944 and serine 948. Disordered stretches follow at residues 984–1033 (SLPG…ISAP), 1062–1155 (SAEA…PCDL), 1216–1493 (KAAS…GAPA), 1530–1620 (FHED…LPTQ), 1638–1712 (PRES…SPLS), 1809–1865 (NQGT…DLSK), 1892–1976 (GKAK…SVSD), 2009–2079 (PDRG…GNIM), 2135–2166 (QVAE…SMAK), 2178–2211 (IRKA…GEDH), 2232–2251 (HFGR…DSQV), 2353–2383 (AKSG…GSLG), 2426–2481 (SRQN…SRSK), and 2516–2564 (ITPR…GEAA). Positions 1012–1022 (MDVHNQEERPR) are enriched in basic and acidic residues. Polar residues-rich tracts occupy residues 1092-1111 (RTDT…QQKS), 1138-1147 (SGSQTVNLTG), 1221-1236 (LGQQ…SDLI), 1250-1269 (SKTS…SQPA), 1305-1315 (TRSASETSTPH), 1384-1401 (SVSS…PSTD), and 1440-1453 (RSPS…GSQE). Low complexity predominate over residues 1662–1672 (SSQPSSLLEMS). The segment covering 1698-1711 (EVTSASSAMENSPL) has biased composition (polar residues). Residue serine 1850 is modified to Phosphoserine. Positions 1919–1931 (SPQTSHKTLSKAV) are enriched in polar residues. Over residues 1936-1945 (HVADHEDPDR) the composition is skewed to basic and acidic residues. Residues 2139–2152 (SSTSHPSSLPSHAS) are compositionally biased toward low complexity. The span at 2370-2383 (GRRSSGSIVSGSLG) shows a compositional bias: low complexity. 3 stretches are compositionally biased toward polar residues: residues 2426–2437 (SRQNPPETSSKG), 2470–2480 (RHTQPSPVSRS), and 2546–2559 (PKTS…SASD). Positions 2622–2706 (FIVLNRKEGS…HKDALVVIKK (85 aa)) constitute a PDZ 5 domain. The interval 2709 to 2729 (DQPRPSARQEPPTANGKGLLS) is disordered. The PDZ 6 domain maps to 2750 to 2835 (CVEVLKTSAG…GPVQLLIRKH (86 aa)).

Interacts with SCN10A, CTNND2 and PKP4. A secreted form is produced by caspase-mediated proteolytic cleavage. Isoform 2 is expressed (at protein level) in prostate and many prostate tumors.

The protein localises to the nucleus. It localises to the cytoplasm. It is found in the endoplasmic reticulum. The protein resides in the secreted. In Homo sapiens (Human), this protein is PDZ domain-containing protein 2 (PDZD2).